The sequence spans 473 residues: O-methyltransferase ARMGADRAFT_1088206 (473 aa).

Residues 276–277, aspartate 299, 330–331, and arginine 348 contribute to the S-adenosyl-L-methionine site; these read AG and DM. Histidine 352 serves as the catalytic Proton acceptor.

This sequence belongs to the class I-like SAM-binding methyltransferase superfamily. Cation-independent O-methyltransferase family.

It participates in secondary metabolite biosynthesis. Its function is as follows. O-methyltransferase, part of the gene cluster that mediates the biosynthesis of melleolides, a range of antifungal and phytotoxic polyketide derivatives composed of an orsellinic acid (OA) moiety esterified to various sesquiterpene alcohols. The first step in melleolides biosynthesis is performed by the delta(6)-protoilludene synthase PRO1 which catalyzes the cyclization of farnesyl diphosphate to protoilludene. The orsellinic acid synthase armB produces OA by condensing acetyl-CoA with 3 malonyl-CoA units in a three-round chain elongation reaction folowed by a C2-C7 ring closure. ArmB further catalyzes the trans-esterification of OA to the various sesquiterpene alcohols resulting from the hydroxylation of protoilludene. The melleolides cluster also includes 5 cytochrome P450 monooxygenases, 4 NAD(+)-dependent oxidoreductases, one flavin-dependent oxidoreductase, and one O-methyltransferase. The cytochrome P450 monooxygenases may be involved in protoilludene hydroxylation to elaborate melleolides with multiple alcohol groups, such as melleolide D, which carries alcohol functionalities at C-4, C-5, C-10, and C-13. The role of the NAD(+)-dependent enzymes remains unknown. Numerous melleolides, including arnamial, show 5'-O-methylation of the aromatic moiety which may be catalyzed by the methyltransferase encoded in the cluster. The flavin-dependent oxidoreductase might represent the dehydrogenase yielding the aldehyde in position 1 of arnamial and other melleolides. Finally, several halogenase localized outside of the cluster, are able to catalyze the transfer of a single chlorine atom to the melleolide backbone, resulting in a 6'-chloromelleolide product. In Armillaria gallica (Bulbous honey fungus), this protein is O-methyltransferase ARMGADRAFT_1088206.